The sequence spans 433 residues: Putative wall-associated receptor kinase-like 16 (433 aa).

The first 22 residues, 1–22 (MKLQHVVYLVAIFFVVAIFVIA), serve as a signal peptide directing secretion. Residues 23–29 (CIEENKY) are Extracellular-facing. The chain crosses the membrane as a helical span at residues 30–50 (LVWIMIILANTTNILSLVRSI). The Cytoplasmic portion of the chain corresponds to 51-433 (SYIKNIRKHQ…VARFDIEAGR (383 aa)). T97 bears the Phosphothreonine mark. The 284-residue stretch at 108–391 (YDVSRILGQG…RAKTTKHNWL (284 aa)) folds into the Protein kinase domain. ATP is bound by residues 114–122 (LGQGGQWTV) and K136. A Phosphotyrosine modification is found at Y181. D233 functions as the Proton acceptor in the catalytic mechanism. Phosphothreonine is present on residues T267 and T272. Position 280 is a phosphotyrosine (Y280).

Belongs to the protein kinase superfamily. Ser/Thr protein kinase family.

The protein localises to the membrane. The enzyme catalyses L-seryl-[protein] + ATP = O-phospho-L-seryl-[protein] + ADP + H(+). The catalysed reaction is L-threonyl-[protein] + ATP = O-phospho-L-threonyl-[protein] + ADP + H(+). Functionally, putative serine/threonine-protein kinase that may function as a signaling receptor of extracellular matrix component. The sequence is that of Putative wall-associated receptor kinase-like 16 (WAKL16) from Arabidopsis thaliana (Mouse-ear cress).